The chain runs to 751 residues: SKI family transcriptional corepressor 1 homolog-B (751 aa).

5 disordered regions span residues 1 to 30, 234 to 267, 386 to 434, 459 to 569, and 600 to 635; these read MESI…SGPP, SRKR…PHKT, LDVS…GIPP, YGNR…HGNK, and QRET…SEER. Polar residues-rich tracts occupy residues 14 to 27 and 244 to 259; these read SSCS…QSYS and SESS…TQGE. The segment covering 416–428 has biased composition (basic and acidic residues); it reads RNEEDKSGDESRS. A compositionally biased stretch (low complexity) spans 479–491; sequence SESSSYRSVSPDV. The span at 539–558 shows a compositional bias: polar residues; it reads QENTQMHTLNDLHSTNSSET. Basic and acidic residues-rich tracts occupy residues 559-569, 603-612, and 620-635; these read RPSDMESHGNK, TSVKDVHEEE, and MEPK…SEER. The stretch at 666–704 forms a coiled coil; it reads SMAKEELQKQLVEQVELRKKLEREFQNLKDSFQDQMKRE.

Belongs to the SKI family.

The protein resides in the nucleus. In terms of biological role, may inhibit BMP signaling. This chain is SKI family transcriptional corepressor 1 homolog-B (skor1b), found in Danio rerio (Zebrafish).